Reading from the N-terminus, the 894-residue chain is Transcriptional activator/repressor GIS1 (894 aa).

Positions 12 to 53 (VPVFKPSMMEFANFQYFIDEITKFGIENGIVKVIPPKEWLEL) constitute a JmjN domain. A Phosphoserine modification is found at serine 70. Residues 90–110 (ENEYDNKSYNLTQWKNLAESL) are a coiled coil. The region spanning 170 to 324 (PYDLTLWNLN…VRKQPLKCGC (155 aa)) is the JmjC domain. The Bipartite nuclear localization signal motif lies at 316 to 332 (RKQPLKCGCGNKKEERK). The interval 324 to 355 (CGNKKEERKSGPFSNLSYDSNESEQRGSITDN) is disordered. The span at 335-354 (PFSNLSYDSNESEQRGSITD) shows a compositional bias: polar residues. At serine 343 the chain carries Phosphoserine. The stretch at 361-385 (QKVRSFDELLNHSSQELQNLEDNKN) forms a coiled coil. Positions 521–554 (NISSTNNSANNSSSNNNVSTVPSSMMHSSTLNGT) are enriched in low complexity. The interval 521 to 558 (NISSTNNSANNSSSNNNVSTVPSSMMHSSTLNGTSGLG) is disordered. Residues serine 690, serine 694, serine 696, serine 734, and serine 747 each carry the phosphoserine modification. The segment covering 756–768 (LNGNDNSNLDSNN) has biased composition (low complexity). Residues 756–810 (LNGNDNSNLDSNNFDYSFTGNKQESNPSILNNNTNNNDNYRTSSMNNNGNNYQAH) form a disordered region. 2 stretches are compositionally biased toward polar residues: residues 769–785 (FDYS…PSIL) and 795–810 (YRTS…YQAH). A C2H2-type 1 zinc finger spans residues 828–851 (YICRECNRQFSSGHHLTRHKKSVH). The segment at 857–882 (HSCPRCGKRFKRRDHVLQHLNKKIPC) adopts a C2H2-type 2; atypical zinc-finger fold.

The protein resides in the nucleus. In terms of biological role, transcription factor involved in the regulation of gene expression upon nutrient starvation. Recognizes and binds to the post-diauxic-shift element 5'-T[AT]AGGGAT-3' in the promoter region. Can act as a transcriptional activator (e.g. of stress genes like SSA3, HSP12 and HSP26) as well as a repressor (e.g. of pyrophosphate phosphatase DPP1). GIS1 also acts as a DNA damage-responsive transcriptional repressor of photolyase PHR1. This is Transcriptional activator/repressor GIS1 (GIS1) from Saccharomyces cerevisiae (strain ATCC 204508 / S288c) (Baker's yeast).